A 266-amino-acid polypeptide reads, in one-letter code: Enterotoxin type C-1 (266 aa).

Residues 1 to 27 form the signal peptide; that stretch reads MNKSRFISCVILIFALILVLFTPNVLA. Cysteine 120 and cysteine 137 are joined by a disulfide.

It belongs to the staphylococcal/streptococcal toxin family. As to quaternary structure, interacts with host MHC class II molecules composed of alpha/HLA-DRA and beta/HLA-DRB1 chains.

It localises to the secreted. In terms of biological role, staphylococcal enterotoxin that activates the host immune system by binding as unprocessed molecules to major histocompatibility (MHC) complex class II and T-cell receptor (TCR) molecules. In turn, this ternary complex activates a large number of T-lymphocytes initiating a systemic release of pro-inflammatory cytokines. Inhibits SEC1-mediated T-cell activation in the absence of MHC class II by competing with SEC1 for binding to the host TCR. Also causes the intoxication staphylococcal food poisoning syndrome. This Staphylococcus aureus protein is Enterotoxin type C-1 (entC1).